Consider the following 213-residue polypeptide: High frequency lysogenization protein HflD homolog (213 aa).

It belongs to the HflD family.

The protein localises to the cytoplasm. It is found in the cell inner membrane. This is High frequency lysogenization protein HflD homolog from Nitrosococcus oceani (strain ATCC 19707 / BCRC 17464 / JCM 30415 / NCIMB 11848 / C-107).